Reading from the N-terminus, the 185-residue chain is Ribosome-recycling factor (185 aa).

This sequence belongs to the RRF family.

The protein localises to the cytoplasm. Responsible for the release of ribosomes from messenger RNA at the termination of protein biosynthesis. May increase the efficiency of translation by recycling ribosomes from one round of translation to another. The chain is Ribosome-recycling factor from Hahella chejuensis (strain KCTC 2396).